A 368-amino-acid polypeptide reads, in one-letter code: tRNA/tmRNA (uracil-C(5))-methyltransferase (368 aa).

S-adenosyl-L-methionine-binding residues include glutamine 186, tyrosine 214, asparagine 219, glutamate 235, and aspartate 295. Residue cysteine 320 is the Nucleophile of the active site. Catalysis depends on glutamate 354, which acts as the Proton acceptor.

This sequence belongs to the class I-like SAM-binding methyltransferase superfamily. RNA M5U methyltransferase family. TrmA subfamily.

It catalyses the reaction uridine(54) in tRNA + S-adenosyl-L-methionine = 5-methyluridine(54) in tRNA + S-adenosyl-L-homocysteine + H(+). The catalysed reaction is uridine(341) in tmRNA + S-adenosyl-L-methionine = 5-methyluridine(341) in tmRNA + S-adenosyl-L-homocysteine + H(+). In terms of biological role, dual-specificity methyltransferase that catalyzes the formation of 5-methyluridine at position 54 (m5U54) in all tRNAs, and that of position 341 (m5U341) in tmRNA (transfer-mRNA). This chain is tRNA/tmRNA (uracil-C(5))-methyltransferase, found in Aromatoleum aromaticum (strain DSM 19018 / LMG 30748 / EbN1) (Azoarcus sp. (strain EbN1)).